The chain runs to 344 residues: Heat-inducible transcription repressor HrcA (344 aa).

Belongs to the HrcA family.

Functionally, negative regulator of class I heat shock genes (grpE-dnaK-dnaJ and groELS operons). Prevents heat-shock induction of these operons. This chain is Heat-inducible transcription repressor HrcA, found in Streptococcus pneumoniae (strain Taiwan19F-14).